Here is a 436-residue protein sequence, read N- to C-terminus: Glutamate-1-semialdehyde 2,1-aminomutase (436 aa).

N6-(pyridoxal phosphate)lysine is present on Lys272.

Belongs to the class-III pyridoxal-phosphate-dependent aminotransferase family. HemL subfamily. As to quaternary structure, homodimer. The cofactor is pyridoxal 5'-phosphate.

Its subcellular location is the cytoplasm. The enzyme catalyses (S)-4-amino-5-oxopentanoate = 5-aminolevulinate. It functions in the pathway porphyrin-containing compound metabolism; protoporphyrin-IX biosynthesis; 5-aminolevulinate from L-glutamyl-tRNA(Glu): step 2/2. Its pathway is porphyrin-containing compound metabolism; chlorophyll biosynthesis. The chain is Glutamate-1-semialdehyde 2,1-aminomutase from Methylibium petroleiphilum (strain ATCC BAA-1232 / LMG 22953 / PM1).